The primary structure comprises 362 residues: Formate dehydrogenase (362 aa).

Positions 93 and 119 each coordinate substrate. Residues 174-175 (RI), Asp-195, 230-234 (PLHAG), Thr-256, Asp-282, 311-314 (HYSG), and Ser-357 contribute to the NAD(+) site.

Belongs to the D-isomer specific 2-hydroxyacid dehydrogenase family. FDH subfamily. As to quaternary structure, homodimer.

The protein resides in the cytoplasm. It catalyses the reaction formate + NAD(+) = CO2 + NADH. In terms of biological role, catalyzes the NAD(+)-dependent oxidation of formate to carbon dioxide. Formate oxidation is the final step in the methanol oxidation pathway in methylotrophic microorganisms. Has a role in the detoxification of exogenous formate in non-methylotrophic organisms. The polypeptide is Formate dehydrogenase (Pichia angusta (Yeast)).